A 101-amino-acid polypeptide reads, in one-letter code: Protein Tat (101 aa).

A compositionally biased stretch (basic and acidic residues) spans 1 to 12; it reads MEPVDPRLEPWK. A disordered region spans residues 1–20; that stretch reads MEPVDPRLEPWKHPGSQPKT. Residues 1–24 form an interaction with human CREBBP region; that stretch reads MEPVDPRLEPWKHPGSQPKTACTT. A transactivation region spans residues 1–48; sequence MEPVDPRLEPWKHPGSQPKTACTTCYCKKCCFHCQVCFTKKALGISYG. Positions 22, 25, and 27 each coordinate Zn(2+). Positions 22–37 are cysteine-rich; that stretch reads CTTCYCKKCCFHCQVC. An N6-acetyllysine; by host PCAF modification is found at lysine 28. 4 residues coordinate Zn(2+): cysteine 30, histidine 33, cysteine 34, and cysteine 37. Residues 38–48 form a core region; that stretch reads FTKKALGISYG. Positions 47–101 are disordered; it reads YGRKKRRQRRRAPEDSQTHQVSLPKQPAPQFRGDPTGPKESKKKVERETETHPVD. Residues 49 to 57 carry the Nuclear localization signal, RNA-binding (TAR), and protein transduction motif; sequence RKKRRQRRR. Residues 49–86 are interaction with the host capping enzyme RNGTT; the sequence is RKKRRQRRRAPEDSQTHQVSLPKQPAPQFRGDPTGPKE. N6-acetyllysine; by host EP300 and GCN5L2 is present on residues lysine 50 and lysine 51. An asymmetric dimethylarginine; by host PRMT6 mark is found at arginine 52 and arginine 53. Lysine 71 is covalently cross-linked (Glycyl lysine isopeptide (Lys-Gly) (interchain with G-Cter in ubiquitin)). The Cell attachment site signature appears at 78–80; that stretch reads RGD. Positions 83-101 are enriched in basic and acidic residues; that stretch reads GPKESKKKVERETETHPVD.

It belongs to the lentiviruses Tat family. Interacts with host CCNT1. Associates with the P-TEFb complex composed at least of Tat, P-TEFb (CDK9 and CCNT1), TAR RNA, RNA Pol II. Recruits the HATs CREBBP, TAF1/TFIID, EP300, PCAF and GCN5L2. Interacts with host KAT5/Tip60; this interaction targets the latter to degradation. Interacts with the host deacetylase SIRT1. Interacts with host capping enzyme RNGTT; this interaction stimulates RNGTT. Binds to host KDR, and to the host integrins ITGAV/ITGB3 and ITGA5/ITGB1. Interacts with host KPNB1/importin beta-1 without previous binding to KPNA1/importin alpha-1. Interacts with EIF2AK2. Interacts with host nucleosome assembly protein NAP1L1; this interaction may be required for the transport of Tat within the nucleus, since the two proteins interact at the nuclear rim. Interacts with host C1QBP/SF2P32; this interaction involves lysine-acetylated Tat. Interacts with the host chemokine receptors CCR2, CCR3 and CXCR4. Interacts with host DPP4/CD26; this interaction may trigger an anti-proliferative effect. Interacts with host LDLR. Interacts with the host extracellular matrix metalloproteinase MMP1. Interacts with host PRMT6; this interaction mediates Tat's methylation. Interacts with, and is ubiquitinated by MDM2/Hdm2. Interacts with host PSMC3 and HTATIP2. Interacts with STAB1; this interaction may overcome SATB1-mediated repression of IL2 and IL2RA (interleukin) in T cells by binding to the same domain than HDAC1. Interacts (when acetylated) with human CDK13, thereby increasing HIV-1 mRNA splicing and promoting the production of the doubly spliced HIV-1 protein Nef. Interacts with host TBP; this interaction modulates the activity of transcriptional pre-initiation complex. Interacts with host RELA. Interacts with host PLSCR1; this interaction negatively regulates Tat transactivation activity by altering its subcellular distribution. Post-translationally, asymmetrical arginine methylation by host PRMT6 seems to diminish the transactivation capacity of Tat and affects the interaction with host CCNT1. Acetylation by EP300, CREBBP, GCN5L2/GCN5 and PCAF regulates the transactivation activity of Tat. EP300-mediated acetylation of Lys-50 promotes dissociation of Tat from the TAR RNA through the competitive binding to PCAF's bromodomain. In addition, the non-acetylated Tat's N-terminus can also interact with PCAF. PCAF-mediated acetylation of Lys-28 enhances Tat's binding to CCNT1. Lys-50 is deacetylated by SIRT1. In terms of processing, polyubiquitination by host MDM2 does not target Tat to degradation, but activates its transactivation function and fosters interaction with CCNT1 and TAR RNA. Post-translationally, phosphorylated by EIF2AK2 on serine and threonine residues adjacent to the basic region important for TAR RNA binding and function. Phosphorylation of Tat by EIF2AK2 is dependent on the prior activation of EIF2AK2 by dsRNA.

The protein localises to the host nucleus. Its subcellular location is the host nucleolus. It is found in the host cytoplasm. The protein resides in the secreted. Transcriptional activator that increases RNA Pol II processivity, thereby increasing the level of full-length viral transcripts. Recognizes a hairpin structure at the 5'-LTR of the nascent viral mRNAs referred to as the transactivation responsive RNA element (TAR) and recruits the cyclin T1-CDK9 complex (P-TEFb complex) that will in turn hyperphosphorylate the RNA polymerase II to allow efficient elongation. The CDK9 component of P-TEFb and other Tat-activated kinases hyperphosphorylate the C-terminus of RNA Pol II that becomes stabilized and much more processive. Other factors such as HTATSF1/Tat-SF1, SUPT5H/SPT5, and HTATIP2 are also important for Tat's function. Besides its effect on RNA Pol II processivity, Tat induces chromatin remodeling of proviral genes by recruiting the histone acetyltransferases (HATs) CREBBP, EP300 and PCAF to the chromatin. This also contributes to the increase in proviral transcription rate, especially when the provirus integrates in transcriptionally silent region of the host genome. To ensure maximal activation of the LTR, Tat mediates nuclear translocation of NF-kappa-B by interacting with host RELA. Through its interaction with host TBP, Tat may also modulate transcription initiation. Tat can reactivate a latently infected cell by penetrating in it and transactivating its LTR promoter. In the cytoplasm, Tat is thought to act as a translational activator of HIV-1 mRNAs. In terms of biological role, extracellular circulating Tat can be endocytosed by surrounding uninfected cells via the binding to several surface receptors such as CD26, CXCR4, heparan sulfate proteoglycans (HSPG) or LDLR. Neurons are rarely infected, but they internalize Tat via their LDLR. Through its interaction with nuclear HATs, Tat is potentially able to control the acetylation-dependent cellular gene expression. Modulates the expression of many cellular genes involved in cell survival, proliferation or in coding for cytokines or cytokine receptors. Tat plays a role in T-cell and neurons apoptosis. Tat induced neurotoxicity and apoptosis probably contribute to neuroAIDS. Circulating Tat also acts as a chemokine-like and/or growth factor-like molecule that binds to specific receptors on the surface of the cells, affecting many cellular pathways. In the vascular system, Tat binds to ITGAV/ITGB3 and ITGA5/ITGB1 integrins dimers at the surface of endothelial cells and competes with bFGF for heparin-binding sites, leading to an excess of soluble bFGF. The chain is Protein Tat from Human immunodeficiency virus type 1 group M subtype B (isolate MN) (HIV-1).